Here is a 346-residue protein sequence, read N- to C-terminus: Leucine zipper protein 2 (346 aa).

Residues Met1–Ser19 form the signal peptide. The stretch at Leu16–Gln211 forms a coiled coil. Asn133 is a glycosylation site (N-linked (GlcNAc...) asparagine). A leucine-zipper region spans residues Leu164 to Leu192. Disordered stretches follow at residues Gln221–Pro240 and Pro248–Leu346. Over residues Ala250 to Ser261 the composition is skewed to low complexity. Positions Gly262–Asp283 are enriched in polar residues. A glycan (N-linked (GlcNAc...) asparagine) is linked at Asn264. Residues Asp286–Ser298 show a composition bias toward basic and acidic residues. Asn302 carries an N-linked (GlcNAc...) asparagine glycan.

It localises to the secreted. The chain is Leucine zipper protein 2 (LUZP2) from Homo sapiens (Human).